The primary structure comprises 475 residues: Divinyl ether synthase CYP74M1 (475 aa).

Cys-427 is a binding site for heme.

The protein belongs to the cytochrome P450 family. The cofactor is heme.

The enzyme catalyses (13S)-hydroperoxy-(9Z,11E)-octadecadienoate = etheroleate + H2O. The catalysed reaction is (13S)-hydroperoxy-(9Z,11E,15Z)-octadecatrienoate = etherolenate + H2O. The protein operates within lipid metabolism; oxylipin biosynthesis. Functionally, divinyl ether synthase involved in oxylipin biosynthesis. Catalyzes the conversion of (13S)-hydroperoxy-(9Z,11E)-octadecadienoate (13-HPOD) to etheroleate and (13S)-hydroperoxy-(9Z,11E,15Z)-octadecatrienoate (13-HPOT) to etherolenate. Has no activity with the corresponding 9-hydroperoxides (9-HPOD and 9-HPOT). The chain is Divinyl ether synthase CYP74M1 from Selaginella moellendorffii (Spikemoss).